A 415-amino-acid polypeptide reads, in one-letter code: Imidazolonepropionase (415 aa).

Fe(3+) is bound by residues His-80 and His-82. Residues His-80 and His-82 each contribute to the Zn(2+) site. 4-imidazolone-5-propanoate contacts are provided by Arg-89, Tyr-152, and His-185. Tyr-152 is a binding site for N-formimidoyl-L-glutamate. Residue His-250 coordinates Fe(3+). His-250 lines the Zn(2+) pocket. Gln-253 is a 4-imidazolone-5-propanoate binding site. Asp-325 is a Fe(3+) binding site. Asp-325 is a Zn(2+) binding site. Positions 327 and 329 each coordinate N-formimidoyl-L-glutamate. Thr-330 contacts 4-imidazolone-5-propanoate.

Belongs to the metallo-dependent hydrolases superfamily. HutI family. The cofactor is Zn(2+). Requires Fe(3+) as cofactor.

The protein localises to the cytoplasm. The enzyme catalyses 4-imidazolone-5-propanoate + H2O = N-formimidoyl-L-glutamate. It participates in amino-acid degradation; L-histidine degradation into L-glutamate; N-formimidoyl-L-glutamate from L-histidine: step 3/3. Catalyzes the hydrolytic cleavage of the carbon-nitrogen bond in imidazolone-5-propanoate to yield N-formimidoyl-L-glutamate. It is the third step in the universal histidine degradation pathway. This Rhizobium meliloti (strain 1021) (Ensifer meliloti) protein is Imidazolonepropionase.